The sequence spans 284 residues: MDAIKKKMQMLKLDKENALDRAEQAEADKKAAEERSKQLEDELVALQKKLKGTEDELDKYSESLKDAQEKLELADKKATDAESEVASLNRRIQLVEEELDRAQERLATALQKLEEAEKAADESERGMKVIENRAQKDEEKMEIQEIQLKEAKHIAEEADRKYEEVARKLVIIEGDLERAEERAELSESKCAELEEELKTVTNNLKSLEAQAEKYSQKEDKYEEEIKVLTDKLKEAETRAEFAERSVTKLEKSIDDLEDELYAQKLKYKAISEELDHALNDMTSI.

The tract at residues 1-38 (MDAIKKKMQMLKLDKENALDRAEQAEADKKAAEERSKQ) is disordered. The stretch at 1 to 284 (MDAIKKKMQM…DHALNDMTSI (284 aa)) forms a coiled coil. Over residues 12-38 (KLDKENALDRAEQAEADKKAAEERSKQ) the composition is skewed to basic and acidic residues.

It belongs to the tropomyosin family. As to quaternary structure, homodimer. Heterodimer of an alpha (TPM1, TPM3 or TPM4) and a beta (TPM2) chain. Interacts with HRG (via the HRR domain); the interaction contributes to the antiangiogenic properties of the histidine/proline-rich region (HRR) of HRG.

The protein localises to the cytoplasm. Its subcellular location is the cytoskeleton. Binds to actin filaments in muscle and non-muscle cells. Plays a central role, in association with the troponin complex, in the calcium dependent regulation of vertebrate striated muscle contraction. Smooth muscle contraction is regulated by interaction with caldesmon. In non-muscle cells is implicated in stabilizing cytoskeleton actin filaments. This Coturnix japonica (Japanese quail) protein is Tropomyosin alpha-1 chain (TPM1).